The following is a 172-amino-acid chain: Large ribosomal subunit protein uL10 (172 aa).

This sequence belongs to the universal ribosomal protein uL10 family. As to quaternary structure, part of the ribosomal stalk of the 50S ribosomal subunit. The N-terminus interacts with L11 and the large rRNA to form the base of the stalk. The C-terminus forms an elongated spine to which L12 dimers bind in a sequential fashion forming a multimeric L10(L12)X complex.

Functionally, forms part of the ribosomal stalk, playing a central role in the interaction of the ribosome with GTP-bound translation factors. The sequence is that of Large ribosomal subunit protein uL10 from Rhizobium meliloti (strain 1021) (Ensifer meliloti).